Reading from the N-terminus, the 906-residue chain is Eukaryotic translation initiation factor 4 gamma 2 (906 aa).

At M1 the chain carries N-acetylmethionine. Residues 1-71 form a disordered region; it reads MESAIAEGGA…SAANNSANEK (71 aa). S11 bears the Phosphoserine mark. The MIF4G domain maps to 78-308; it reads FRKVRGILNK…QDTVELREHH (231 aa). T89 is modified (phosphothreonine). R359 bears the Omega-N-methylarginine mark. The residue at position 394 (S394) is a Phosphoserine. At K430 the chain carries N6-methyllysine. S442 carries the post-translational modification Phosphoserine. Residues 497 to 540 are disordered; the sequence is PPSAQPPRTQTPPLGQTPQLGLKTNPPLIQEKPAKTSKKPPPSK. The span at 502-515 shows a compositional bias: polar residues; that stretch reads PPRTQTPPLGQTPQ. Residue R504 is modified to Omega-N-methylarginine. Phosphothreonine is present on residues T507 and T513. Positions 542-665 constitute an MI domain; it reads ELLKLTEAVV…SISELAQPLE (124 aa). K574 participates in a covalent cross-link: Glycyl lysine isopeptide (Lys-Gly) (interchain with G-Cter in SUMO2). Residues 719 to 903 enclose the W2 domain; sequence EGKGLSFLFP…ETAEEEESEE (185 aa). At S901 the chain carries Phosphoserine.

Belongs to the eukaryotic initiation factor 4G family. In terms of assembly, interacts with the serine/threonine protein kinases MKNK1 and MKNK2. Binds EIF4A and EIF3. Interacts with MIF4GD. Interacts with DAZAP2. Phosphorylation; hyperphosphorylated during mitosis. In terms of tissue distribution, ubiquitously expressed in all tissues examined.

Appears to play a role in the switch from cap-dependent to IRES-mediated translation during mitosis, apoptosis and viral infection. Cleaved by some caspases and viral proteases. The protein is Eukaryotic translation initiation factor 4 gamma 2 of Mus musculus (Mouse).